We begin with the raw amino-acid sequence, 557 residues long: Probable asparagine synthetase [glutamine-hydrolyzing] (557 aa).

Cys-2 acts as the For GATase activity in catalysis. One can recognise a Glutamine amidotransferase type-2 domain in the interval 2–188 (CGILAVHHVA…PGHYYDSETK (187 aa)). L-glutamine is bound by residues 50–54 (RLAIV), 75–77 (NGE), and Asp-99. The region spanning 196–531 (PSWWDENKIP…PRQCADTVMR (336 aa)) is the Asparagine synthetase domain. ATP is bound by residues Leu-235, Ile-280, and 354-355 (SG). Phosphoserine occurs at positions 391 and 489.

The protein localises to the cytoplasm. Its subcellular location is the nucleus. It carries out the reaction L-aspartate + L-glutamine + ATP + H2O = L-asparagine + L-glutamate + AMP + diphosphate + H(+). Its pathway is amino-acid biosynthesis; L-asparagine biosynthesis; L-asparagine from L-aspartate (L-Gln route): step 1/1. This is Probable asparagine synthetase [glutamine-hydrolyzing] (asn1) from Schizosaccharomyces pombe (strain 972 / ATCC 24843) (Fission yeast).